A 500-amino-acid polypeptide reads, in one-letter code: Probable cytosol aminopeptidase (500 aa).

The Mn(2+) site is built by Lys-265 and Asp-270. Lys-277 is an active-site residue. 3 residues coordinate Mn(2+): Asp-288, Asp-347, and Glu-349. Residue Arg-351 is part of the active site.

It belongs to the peptidase M17 family. It depends on Mn(2+) as a cofactor.

The protein localises to the cytoplasm. It catalyses the reaction Release of an N-terminal amino acid, Xaa-|-Yaa-, in which Xaa is preferably Leu, but may be other amino acids including Pro although not Arg or Lys, and Yaa may be Pro. Amino acid amides and methyl esters are also readily hydrolyzed, but rates on arylamides are exceedingly low.. It carries out the reaction Release of an N-terminal amino acid, preferentially leucine, but not glutamic or aspartic acids.. In terms of biological role, presumably involved in the processing and regular turnover of intracellular proteins. Catalyzes the removal of unsubstituted N-terminal amino acids from various peptides. In Rickettsia rickettsii (strain Iowa), this protein is Probable cytosol aminopeptidase.